The sequence spans 137 residues: Small ribosomal subunit protein uS11 (137 aa).

Residues Glu116–Leu137 form a disordered region. Residues Lys128 to Leu137 show a composition bias toward basic residues.

Belongs to the universal ribosomal protein uS11 family.

This Kluyveromyces lactis (strain ATCC 8585 / CBS 2359 / DSM 70799 / NBRC 1267 / NRRL Y-1140 / WM37) (Yeast) protein is Small ribosomal subunit protein uS11 (RPS14).